A 533-amino-acid polypeptide reads, in one-letter code: Fimbrial subunit type 1 (533 aa).

The N-terminal stretch at 1-30 is a signal peptide; the sequence is MHSLNTRRGLGLAAAMTLAAGALVAPTGAA. An LPXTG sorting signal motif is present at residues 496 to 500; sequence LPLTG. A Pentaglycyl murein peptidoglycan amidated threonine modification is found at Thr-499. Residues 500-533 constitute a propeptide, removed by sortase; that stretch reads GANGVIFLTIAGALLVAGGAVVAYANKRRHVAKH.

The protein resides in the secreted. Its subcellular location is the cell wall. The protein localises to the fimbrium. Major fimbrial subunit of A.viscosus. The protein is Fimbrial subunit type 1 of Actinomyces viscosus.